Here is a 124-residue protein sequence, read N- to C-terminus: MARIAGVDIPTQKRVVISLQYIYGIGQTTAQEVLKNANVSEDIRVKDLNDDQLSAIRGEVAKIVTEGDLRRESTLNIKRLMEIGSYRGIRHRKGLPVNGQNTRNNARTRKGKPKAVTGKKQAGK.

The tract at residues 91-124 (HRKGLPVNGQNTRNNARTRKGKPKAVTGKKQAGK) is disordered.

This sequence belongs to the universal ribosomal protein uS13 family. Part of the 30S ribosomal subunit. Forms a loose heterodimer with protein S19. Forms two bridges to the 50S subunit in the 70S ribosome.

In terms of biological role, located at the top of the head of the 30S subunit, it contacts several helices of the 16S rRNA. In the 70S ribosome it contacts the 23S rRNA (bridge B1a) and protein L5 of the 50S subunit (bridge B1b), connecting the 2 subunits; these bridges are implicated in subunit movement. Contacts the tRNAs in the A and P-sites. This is Small ribosomal subunit protein uS13 from Acholeplasma laidlawii (strain PG-8A).